The chain runs to 64 residues: Large ribosomal subunit protein bL35 (64 aa).

The protein belongs to the bacterial ribosomal protein bL35 family.

In Leifsonia xyli subsp. xyli (strain CTCB07), this protein is Large ribosomal subunit protein bL35.